A 172-amino-acid polypeptide reads, in one-letter code: Putative phosphoesterase BT9727_1129 (172 aa).

Histidine 34 functions as the Proton donor in the catalytic mechanism. 2 consecutive short sequence motifs (HXTX) follow at residues histidine 34–leucine 37 and histidine 115–isoleucine 118. Residue histidine 115 is the Proton acceptor of the active site.

It belongs to the 2H phosphoesterase superfamily. YjcG family.

The protein is Putative phosphoesterase BT9727_1129 of Bacillus thuringiensis subsp. konkukian (strain 97-27).